The sequence spans 864 residues: E3 ubiquitin-protein ligase Itchy (864 aa).

The C2 domain maps to 1 to 115; sequence MSDSGPQLDS…LKSNNMKLEE (115 aa). N-acetylserine is present on Ser2. The segment covering 151–164 has biased composition (polar residues); it reads NGETSCSESTTQND. The tract at residues 151–294 is disordered; that stretch reads NGETSCSEST…SQAPLPPGWE (144 aa). Positions 165 to 174 are enriched in basic and acidic residues; it reads DGCRTRDDTR. A compositionally biased stretch (low complexity) spans 195–206; that stretch reads NGNNSPSLSNGG. A Phosphoserine; by MAPK8 modification is found at Ser199. The segment covering 210–224 has biased composition (pro residues); it reads SRPPRPSRPPPPTPR. Thr222 is subject to Phosphothreonine; by MAPK8. Over residues 230–259 the composition is skewed to low complexity; the sequence is NGSPSTNSDSDGSSTGSLPPTNTNVNTSTS. At Ser232 the chain carries Phosphoserine; by MAPK8. WW domains lie at 287–320 and 319–352; these read APLP…RPEP and EPLP…RPTL. Thr346 bears the Phosphothreonine; by SGK3 mark. The required for interaction with FYN stretch occupies residues 356–432; the sequence is RNYEQWQLQR…RITQWEDPRS (77 aa). The residue at position 381 (Tyr381) is a Phosphotyrosine; by FYN. 2 consecutive WW domains span residues 399 to 432 and 439 to 472; these read GPLP…DPRS and KPLP…DPRT. Ser411 is modified (phosphoserine; by SGK3). The HECT domain occupies 530–864; it reads SPQDLRRRLW…IEETEGFGQE (335 aa). Residues 535–544 are MAP kinase docking site; the sequence is RRRLWVIFPG. The active-site Glycyl thioester intermediate is Cys832.

As to quaternary structure, monomer. Part of a ternary complex composed of SMAD3, ITCH/AIP4 and NEDD9/HEF1; within the complex NEDD9/HEF1 interacts (via N-terminus) with ITCH/AIP4 (via WW domains); the complex mediates ubiquitination and proteasomal degradation of NEDD9/HEF1. Interacts (via WW domains) with OCNL. Interacts (via WW domains) with NOTCH1. Interacts (via WW domains) JUN. Interacts with JUNB; the interaction promotes ITCH-mediated ubiquitination and degradation of JUNB. Interacts with FYN; the interaction phosphorylates ITCH on Tyr-381 decreasing binding of JUNB. Interacts (via WW domain 2) with N4BP1; the interaction inhibits the E3 ubiquitin-protein ligase activity. Interacts with NDFIP1 and NDFIP2; the interaction with NDFIP proteins activates the E3 ubiquitin-protein ligase and may induce its recruitment to exosomes. Interacts with ARHGEF7. Interacts with RNF11. Interacts (via the WW 1 domain) with NFE2 (via the PXY motif 1); the interaction promotes 'Lys-63'-linked ubiquitination of NFE2, retains it in the cytoplasm and prevents its transactivation activity. Interacts (via WW domains) with CXCR4 (via C-terminus); the interaction depends on CXCR4 phosphorylation. Found in a complex with E3 ligase DTX3L and ESCRT-0 components HGS and STAM. Interacts with DTX3L (via C-terminus); the interaction is increased upon CXCL12 stimulation and inhibits ITCH catalytic activity (the interaction is direct). Interacts with HGS. Interacts (via WW domains) with PCBP2 within a complex containing ITCH, MAVS and PCBP2. Interacts (via WW domains) with TXNIP (via C-terminus). Interacts with p15 BID. Interacts with ERBB4. Interacts with DTX1. Interacts with SPART. Interacts with SNX9 and SNX18. Interacts (via its WW domains) with ATN1. Interacts (via WW domains) with SGK3. Interacts with CBLC. Interacts with OTUD7B. Interacts (via WW domain 1,2 and 3) with PI4K2A; the interaction inhibits PI4K2A catalytic activity and promotes ITCH catalytic activity. Interacts with ARRDC4. Part of a complex containing ITCH, NDFIP1 and MAP3K7. Interacts with UBE2L3; the interaction is mediated by NDFIP1. Interacts with MAPK8/JNK1. Interacts (via WW domains) with ARRDC1 (via PPxY motifs); the interaction is direct and participates in the recruitment of the ubiquitin-protein ligase ITCH to the NOTCH1 receptor. Interacts (via WW domains) with ARRDC2. Interacts (via WW domains) with ARRDC3. Interacts directly with LDLRAD3; this interaction promotes ITCH auto-ubiquitination leading to its degradation. Interacts with ENTREP1; enhances the ubiquitination of CXCR4 by ITCH and its subsequent endocytosis. Interacts with USP12 and WDR48/UAF1; the interaction is more efficient when both USP12 and WDR48/UAF1 are involved and may facilitate the recruitment of the USP12 deubiquitinase complex to Notch. (Microbial infection) Interacts with Epstein-Barr virus LMP2A. Post-translationally, on T-cell activation, phosphorylation by the JNK cascade on serine and threonine residues surrounding the PRR domain accelerates the ubiquitination and degradation of JUN and JUNB. The increased ITCH catalytic activity due to phosphorylation by JNK1 may occur due to a conformational change disrupting the interaction between the PRR/WW motifs domain and the HECT domain and, thus exposing the HECT domain. Phosphorylation by FYN reduces interaction with JUNB and negatively controls JUN ubiquitination and degradation. Interacts directly with LDLRAD3; this interaction promotes ITCH auto-ubiquitination leading to its degradation. In terms of processing, monoubiquitinated. Autopolyubiquitinated with 'Lys-63' linkages which does not lead to protein degradation. In terms of tissue distribution, detected in uterus (at protein level). Widely expressed.

It is found in the cell membrane. Its subcellular location is the cytoplasm. The protein localises to the nucleus. The protein resides in the early endosome membrane. It localises to the endosome membrane. It carries out the reaction S-ubiquitinyl-[E2 ubiquitin-conjugating enzyme]-L-cysteine + [acceptor protein]-L-lysine = [E2 ubiquitin-conjugating enzyme]-L-cysteine + N(6)-ubiquitinyl-[acceptor protein]-L-lysine.. It participates in protein modification; protein ubiquitination. Activated by NDFIP1- and NDFIP2-binding. Activated by PI4K2A-binding. Inhibited by DTX3L-binding. Inhibited by N4BP1 binding. Its function is as follows. Acts as an E3 ubiquitin-protein ligase which accepts ubiquitin from an E2 ubiquitin-conjugating enzyme in the form of a thioester and then directly transfers the ubiquitin to targeted substrates. It catalyzes 'Lys-29'-, 'Lys-48'- and 'Lys-63'-linked ubiquitin conjugation. Involved in the control of inflammatory signaling pathways. Is an essential component of a ubiquitin-editing protein complex, comprising also TNFAIP3, TAX1BP1 and RNF11, that ensures the transient nature of inflammatory signaling pathways. Promotes the association of the complex after TNF stimulation. Once the complex is formed, TNFAIP3 deubiquitinates 'Lys-63' polyubiquitin chains on RIPK1 and catalyzes the formation of 'Lys-48'-polyubiquitin chains. This leads to RIPK1 proteasomal degradation and consequently termination of the TNF- or LPS-mediated activation of NFKB1. Ubiquitinates RIPK2 by 'Lys-63'-linked conjugation and influences NOD2-dependent signal transduction pathways. Regulates the transcriptional activity of several transcription factors involved in immune response. Ubiquitinates NFE2 by 'Lys-63' linkages and is implicated in the control of the development of hematopoietic lineages. Mediates JUN ubiquitination and degradation. Mediates JUNB ubiquitination and degradation. Critical regulator of type 2 helper T (Th2) cell cytokine production by inducing JUNB ubiquitination and degradation. Involved in the negative regulation of MAVS-dependent cellular antiviral responses. Ubiquitinates MAVS through 'Lys-48'-linked conjugation resulting in MAVS proteasomal degradation. Following ligand stimulation, regulates sorting of Wnt receptor FZD4 to the degradative endocytic pathway probably by modulating PI42KA activity. Ubiquitinates PI4K2A and negatively regulates its catalytic activity. Ubiquitinates chemokine receptor CXCR4 and regulates sorting of CXCR4 to the degradative endocytic pathway following ligand stimulation by ubiquitinating endosomal sorting complex required for transport ESCRT-0 components HGS and STAM. Targets DTX1 for lysosomal degradation and controls NOTCH1 degradation, in the absence of ligand, through 'Lys-29'-linked polyubiquitination. Ubiquitinates SNX9. Ubiquitinates MAP3K7 through 'Lys-48'-linked conjugation. Together with UBR5, involved in the regulation of apoptosis and reactive oxygen species levels through the ubiquitination and proteasomal degradation of TXNIP: catalyzes 'Lys-48'-/'Lys-63'-branched ubiquitination of TXNIP. ITCH synthesizes 'Lys-63'-linked chains, while UBR5 is branching multiple 'Lys-48'-linked chains of substrate initially modified. Mediates the antiapoptotic activity of epidermal growth factor through the ubiquitination and proteasomal degradation of p15 BID. Ubiquitinates BRAT1 and this ubiquitination is enhanced in the presence of NDFIP1. Ubiquitinates NEDD9/HEF1, resulting in proteasomal degradation of NEDD9/HEF1. This Mus musculus (Mouse) protein is E3 ubiquitin-protein ligase Itchy (Itch).